We begin with the raw amino-acid sequence, 310 residues long: p-hydroxybenzoic acid efflux pump subunit AaeA (310 aa).

Residues 12–32 form a helical membrane-spanning segment; the sequence is AITLVLVILAFIAIFRAWVYY.

The protein belongs to the membrane fusion protein (MFP) (TC 8.A.1) family.

The protein localises to the cell inner membrane. Functionally, forms an efflux pump with AaeB. In Salmonella heidelberg (strain SL476), this protein is p-hydroxybenzoic acid efflux pump subunit AaeA.